The sequence spans 532 residues: Di/tripeptide-binding protein 2 (532 aa).

Residues 1–24 form the signal peptide; it reads MRPRSALRYSLLLLAFAASAAIQA.

It belongs to the bacterial solute-binding protein 5 family. In terms of assembly, the complex is composed of two ATP-binding proteins (DppD and DppF), two transmembrane proteins (DppB and DppC) and a solute-binding protein (DppA2). Five orthologous SBPs (DppA1-A5) are present in P.aeruginosa, which increases the substrate specificity of the DppBCDF transporter.

Its function is as follows. Part of the ABC transporter DppABCDF involved in the uptake of various di/tripeptides. Shows high flexibility on substrate recognition. Efficiently uses tripeptides. The chain is Di/tripeptide-binding protein 2 from Pseudomonas aeruginosa (strain UCBPP-PA14).